The sequence spans 283 residues: Phosphatidylserine decarboxylase proenzyme (283 aa).

Residues Asp96, His152, and Ser250 each act as charge relay system; for autoendoproteolytic cleavage activity in the active site. Catalysis depends on Ser250, which acts as the Schiff-base intermediate with substrate; via pyruvic acid; for decarboxylase activity. The residue at position 250 (Ser250) is a Pyruvic acid (Ser); by autocatalysis.

This sequence belongs to the phosphatidylserine decarboxylase family. PSD-B subfamily. Prokaryotic type I sub-subfamily. As to quaternary structure, heterodimer of a large membrane-associated beta subunit and a small pyruvoyl-containing alpha subunit. Requires pyruvate as cofactor. Is synthesized initially as an inactive proenzyme. Formation of the active enzyme involves a self-maturation process in which the active site pyruvoyl group is generated from an internal serine residue via an autocatalytic post-translational modification. Two non-identical subunits are generated from the proenzyme in this reaction, and the pyruvate is formed at the N-terminus of the alpha chain, which is derived from the carboxyl end of the proenzyme. The autoendoproteolytic cleavage occurs by a canonical serine protease mechanism, in which the side chain hydroxyl group of the serine supplies its oxygen atom to form the C-terminus of the beta chain, while the remainder of the serine residue undergoes an oxidative deamination to produce ammonia and the pyruvoyl prosthetic group on the alpha chain. During this reaction, the Ser that is part of the protease active site of the proenzyme becomes the pyruvoyl prosthetic group, which constitutes an essential element of the active site of the mature decarboxylase.

The protein localises to the cell membrane. The enzyme catalyses a 1,2-diacyl-sn-glycero-3-phospho-L-serine + H(+) = a 1,2-diacyl-sn-glycero-3-phosphoethanolamine + CO2. The protein operates within phospholipid metabolism; phosphatidylethanolamine biosynthesis; phosphatidylethanolamine from CDP-diacylglycerol: step 2/2. Functionally, catalyzes the formation of phosphatidylethanolamine (PtdEtn) from phosphatidylserine (PtdSer). This chain is Phosphatidylserine decarboxylase proenzyme, found in Acinetobacter baumannii (strain SDF).